The primary structure comprises 372 residues: MHKQAPIQRRKSTRIYVGNVPIGDGAPIAVQSMTNTRTTDVEATVNQIKALERVGADIVRVSVPTMDAAEAFKLIKQQVNVPLVADIHFDYRIALKVAEYGVDCLRINPGNIGNEERIRMVVDCARDKNIPIRIGVNAGSLEKDLQEKYGEPTPQALLESAMRHVDHLDRLNFDQFKVSVKASDVFLAVESYRLLAKQIDQPLHLGITEAGGARSGAVKSAIGLGLLLSEGIGDTLRVSLAADPVEEIKVGFDILKSLRIRARGINFIACPTCSRQEFDVIGTVNALEQRLEDIITPMDVSIIGCVVNGPGEALVSTLGVTGGNKKSGLYEDGVRKDRLDNDDMIAQLESRIRAKASQLDEARRIDVLQVEK.

Positions 270, 273, 305, and 312 each coordinate [4Fe-4S] cluster.

This sequence belongs to the IspG family. It depends on [4Fe-4S] cluster as a cofactor.

It carries out the reaction (2E)-4-hydroxy-3-methylbut-2-enyl diphosphate + oxidized [flavodoxin] + H2O + 2 H(+) = 2-C-methyl-D-erythritol 2,4-cyclic diphosphate + reduced [flavodoxin]. The protein operates within isoprenoid biosynthesis; isopentenyl diphosphate biosynthesis via DXP pathway; isopentenyl diphosphate from 1-deoxy-D-xylulose 5-phosphate: step 5/6. Its function is as follows. Converts 2C-methyl-D-erythritol 2,4-cyclodiphosphate (ME-2,4cPP) into 1-hydroxy-2-methyl-2-(E)-butenyl 4-diphosphate. This Salmonella gallinarum (strain 287/91 / NCTC 13346) protein is 4-hydroxy-3-methylbut-2-en-1-yl diphosphate synthase (flavodoxin).